Reading from the N-terminus, the 906-residue chain is NACHT, LRR and PYD domains-containing protein 1b allele 4 (906 aa).

The interval 1 to 22 (MEESPPKQKSNTKVAQHEGQQD) is disordered. Residues 126–435 (QLVIIEGAAG…EFFAAISCIL (310 aa)) enclose the NACHT domain. Position 132–139 (132–139 (GAAGIGKS)) interacts with ATP. 2 LRR repeats span residues 627–647 (NLEGLDLSGNSLRYSVVQSLC) and 684–704 (SLTELYLQLNDLGDDGVRMLC). The region spanning 789–906 (FWGPTGPVAT…FQEHGSRNAR (118 aa)) is the FIIND (incomplete) domain.

The protein belongs to the NLRP family. In terms of tissue distribution, expressed in macrophages.

The protein resides in the cytoplasm. The protein localises to the cytosol. Functionally, probable inactive allele of Nlrp1b, which lacks a CARD domain, suggesting that it is not able to form an inflammasome. Contrary to Nlrp1b allele 1, allele 4 is not activated by B.anthracis lethal toxin and no other activation signal is reported. This chain is NACHT, LRR and PYD domains-containing protein 1b allele 4, found in Mus musculus (Mouse).